The following is a 352-amino-acid chain: MQVSDFHFELPDELIARYPKAERTASRLLQLDGNSGQLVDGTFKDVLELVEPGDLLVFNNTRVIPARMFGRKASGGKLEVLVERMLDEHTILAHVRSSKPPKPGTELYLGENDEFHAVMQARHDALFEIRFTAETVVLDILNQIGHMPLPPYIDRPDEETDKERYQTVYNQKPGAVAAPTAGLHFDQALLEQIQAKGVELAYVTLHVGAGTFQPVRVENIHDHHMHAEYVEVPQEVVDAIAATKARGGRVVAVGTTSVRSLESAAQDALQKGTELKPFFGDTEIFIFPGYQYQLVDCLITNFHLPESTLIMLVSAFAGYEHTMAAYEHAVKEQYRFFSYGDAMFIRKQTTKA.

It belongs to the QueA family. Monomer.

It localises to the cytoplasm. It carries out the reaction 7-aminomethyl-7-carbaguanosine(34) in tRNA + S-adenosyl-L-methionine = epoxyqueuosine(34) in tRNA + adenine + L-methionine + 2 H(+). The protein operates within tRNA modification; tRNA-queuosine biosynthesis. Functionally, transfers and isomerizes the ribose moiety from AdoMet to the 7-aminomethyl group of 7-deazaguanine (preQ1-tRNA) to give epoxyqueuosine (oQ-tRNA). This Vibrio cholerae serotype O1 (strain ATCC 39541 / Classical Ogawa 395 / O395) protein is S-adenosylmethionine:tRNA ribosyltransferase-isomerase.